A 350-amino-acid polypeptide reads, in one-letter code: tRNA N6-adenosine threonylcarbamoyltransferase (350 aa).

Positions 117 and 121 each coordinate Fe cation. Residues 140–144 (LVSGG), Asp173, Gly186, and Asn277 contribute to the substrate site. A Fe cation-binding site is contributed by Asp305.

The protein belongs to the KAE1 / TsaD family. It depends on Fe(2+) as a cofactor.

The protein resides in the cytoplasm. It carries out the reaction L-threonylcarbamoyladenylate + adenosine(37) in tRNA = N(6)-L-threonylcarbamoyladenosine(37) in tRNA + AMP + H(+). Its function is as follows. Required for the formation of a threonylcarbamoyl group on adenosine at position 37 (t(6)A37) in tRNAs that read codons beginning with adenine. Is involved in the transfer of the threonylcarbamoyl moiety of threonylcarbamoyl-AMP (TC-AMP) to the N6 group of A37, together with TsaE and TsaB. TsaD likely plays a direct catalytic role in this reaction. This Novosphingobium aromaticivorans (strain ATCC 700278 / DSM 12444 / CCUG 56034 / CIP 105152 / NBRC 16084 / F199) protein is tRNA N6-adenosine threonylcarbamoyltransferase.